Here is a 644-residue protein sequence, read N- to C-terminus: Probable potassium transport system protein Kup 2 (644 aa).

The tract at residues 1–21 is disordered; that stretch reads MSSDAAAVADRDGSSPGHGGH. The next 12 membrane-spanning stretches (helical) occupy residues 26–46, 69–89, 120–140, 155–175, 183–203, 231–251, 265–285, 312–332, 360–380, 390–410, 419–439, and 444–464; these read LGAM…TSPL, VLSL…VAII, IILL…ITPA, AGFA…LFMI, VGML…VLGT, LAFL…ALYA, WLVF…AMIL, LVIL…TGAF, IYIP…VMSF, YGIA…VVLI, LAAP…GANL, and DGGW…TTWG.

Belongs to the HAK/KUP transporter (TC 2.A.72) family.

It is found in the cell inner membrane. It catalyses the reaction K(+)(in) + H(+)(in) = K(+)(out) + H(+)(out). In terms of biological role, transport of potassium into the cell. Likely operates as a K(+):H(+) symporter. This Rhizorhabdus wittichii (strain DSM 6014 / CCUG 31198 / JCM 15750 / NBRC 105917 / EY 4224 / RW1) (Sphingomonas wittichii) protein is Probable potassium transport system protein Kup 2.